The primary structure comprises 419 residues: L-rhamnose isomerase (419 aa).

Positions 262, 294, and 296 each coordinate Mn(2+).

This sequence belongs to the rhamnose isomerase family. In terms of assembly, homotetramer. Mn(2+) is required as a cofactor.

It is found in the cytoplasm. It carries out the reaction L-rhamnopyranose = L-rhamnulose. It participates in carbohydrate degradation; L-rhamnose degradation; glycerone phosphate from L-rhamnose: step 1/3. Catalyzes the interconversion of L-rhamnose and L-rhamnulose. The protein is L-rhamnose isomerase of Escherichia coli (strain K12 / MC4100 / BW2952).